The chain runs to 298 residues: Mitochondrial intermembrane space import and assembly protein 40 (298 aa).

A mitochondrion-targeting transit peptide spans 1–33; sequence MYRTALRPSQSALRAIRSTTSPSALVSSGARRF. Topologically, residues 34 to 52 are mitochondrial matrix; that stretch reads ASTTSAPKKKSTWKGAAVR. Residues 53-69 traverse the membrane as a helical; Signal-anchor for type II membrane protein segment; sequence WGLAVAAVYYYNTSPIF. Residues 70–298 lie on the Mitochondrial intermembrane side of the membrane; sequence SDELPETAGT…TAANNNKKQQ (229 aa). A disordered region spans residues 101 to 159; that stretch reads RQAAEHAAARKAAQAAAKAAATPATPSESVEEQITKAEAEAEAVPEGDSKPRSESTEGV. Positions 110–121 are enriched in low complexity; sequence RKAAQAAAKAAA. 3 cysteine pairs are disulfide-bonded: Cys-191–Cys-193, Cys-202–Cys-235, and Cys-212–Cys-225. A CHCH domain is found at 199–243; the sequence is HGPCGEEFKAAFSCFVYSTEEPKGMDCIEKFSHMQDCFRKYPEVY. 2 short sequence motifs (cx9C motif) span residues 202–212 and 225–235; these read CGEEFKAAFSC and CIEKFSHMQDC. A disordered region spans residues 248–298; that stretch reads ADDEEAERASAAAPAAEGTPAKEEPVENKKEEALEPATHDATAANNNKKQQ. Over residues 256 to 266 the composition is skewed to low complexity; it reads ASAAAPAAEGT. The segment covering 267 to 280 has biased composition (basic and acidic residues); that stretch reads PAKEEPVENKKEEA.

In terms of assembly, monomer. Cu(2+) serves as cofactor. It depends on Zn(2+) as a cofactor.

It is found in the mitochondrion inner membrane. In terms of biological role, required for the import and folding of small cysteine-containing proteins (small Tim) in the mitochondrial intermembrane space (IMS). Forms a redox cycle with ERV1 that involves a disulfide relay system. Precursor proteins to be imported into the IMS are translocated in their reduced form into the mitochondria. The oxidized form of MIA40 forms a transient intermolecular disulfide bridge with the reduced precursor protein, resulting in oxidation of the precursor protein that now contains an intramolecular disulfide bond and is able to undergo folding in the IMS. The chain is Mitochondrial intermembrane space import and assembly protein 40 (mia-40) from Neurospora crassa (strain ATCC 24698 / 74-OR23-1A / CBS 708.71 / DSM 1257 / FGSC 987).